Consider the following 260-residue polypeptide: HMP-PP phosphatase (260 aa).

Asp8 serves as the catalytic Nucleophile. Residues Asp8, Asp10, and Asp212 each contribute to the Mg(2+) site.

It belongs to the HAD-like hydrolase superfamily. Cof family. Mg(2+) serves as cofactor.

The catalysed reaction is 4-amino-2-methyl-5-(diphosphooxymethyl)pyrimidine + H2O = 4-amino-2-methyl-5-(phosphooxymethyl)pyrimidine + phosphate + H(+). Catalyzes the hydrolysis of 4-amino-2-methyl-5-hydroxymethylpyrimidine pyrophosphate (HMP-PP) to 4-amino-2-methyl-5-hydroxymethylpyrimidine phosphate (HMP-P). In Shigella boydii serotype 4 (strain Sb227), this protein is HMP-PP phosphatase.